The sequence spans 343 residues: 4-hydroxyproline 2-epimerase 1 (343 aa).

Ser-90 functions as the Proton acceptor in the catalytic mechanism. Residues 91-92 (GS), Asp-251, and 256-257 (GT) contribute to the substrate site.

The protein belongs to the proline racemase family.

It carries out the reaction trans-4-hydroxy-L-proline = cis-4-hydroxy-D-proline. Its function is as follows. Catalyzes the epimerization of trans-4-hydroxy-L-proline (t4LHyp) to cis-4-hydroxy-D-proline (c4DHyp) in vitro, albeit with low efficiency. The physiological substrate may be different. Displays no proline racemase activity. The protein is 4-hydroxyproline 2-epimerase 1 of Brucella anthropi (strain ATCC 49188 / DSM 6882 / CCUG 24695 / JCM 21032 / LMG 3331 / NBRC 15819 / NCTC 12168 / Alc 37) (Ochrobactrum anthropi).